We begin with the raw amino-acid sequence, 497 residues long: Glutamate--tRNA ligase (497 aa).

Positions 13–23 match the 'HIGH' region motif; it reads PSPTGDPHVGT. Positions 253–257 match the 'KMSKS' region motif; sequence KISKR. Lysine 256 contacts ATP.

Belongs to the class-I aminoacyl-tRNA synthetase family. Glutamate--tRNA ligase type 1 subfamily. Monomer.

It localises to the cytoplasm. It catalyses the reaction tRNA(Glu) + L-glutamate + ATP = L-glutamyl-tRNA(Glu) + AMP + diphosphate. Catalyzes the attachment of glutamate to tRNA(Glu) in a two-step reaction: glutamate is first activated by ATP to form Glu-AMP and then transferred to the acceptor end of tRNA(Glu). The polypeptide is Glutamate--tRNA ligase (Cutibacterium acnes (strain DSM 16379 / KPA171202) (Propionibacterium acnes)).